A 463-amino-acid chain; its full sequence is tRNA modification GTPase MnmE (463 aa).

Residues Arg26, Glu88, and Arg127 each coordinate (6S)-5-formyl-5,6,7,8-tetrahydrofolate. The TrmE-type G domain occupies 224–383; the sequence is GLATAIIGRP…LEQRIAKMFF (160 aa). Residue Asn234 participates in K(+) binding. GTP is bound by residues 234–239, 253–259, and 278–281; these read NVGKSS, TDVAGTT, and DTAG. Ser238 is a Mg(2+) binding site. Residues Thr253, Val255, and Thr258 each contribute to the K(+) site. Thr259 contacts Mg(2+). Lys463 contacts (6S)-5-formyl-5,6,7,8-tetrahydrofolate.

Belongs to the TRAFAC class TrmE-Era-EngA-EngB-Septin-like GTPase superfamily. TrmE GTPase family. In terms of assembly, homodimer. Heterotetramer of two MnmE and two MnmG subunits. K(+) serves as cofactor.

The protein resides in the cytoplasm. Functionally, exhibits a very high intrinsic GTPase hydrolysis rate. Involved in the addition of a carboxymethylaminomethyl (cmnm) group at the wobble position (U34) of certain tRNAs, forming tRNA-cmnm(5)s(2)U34. This is tRNA modification GTPase MnmE from Lactiplantibacillus plantarum (strain ATCC BAA-793 / NCIMB 8826 / WCFS1) (Lactobacillus plantarum).